We begin with the raw amino-acid sequence, 490 residues long: Polyamine transporter RMV1 (490 aa).

Positions M1–E21 are enriched in polar residues. The disordered stretch occupies residues M1–D38. The next 12 helical transmembrane spans lie at I53–I73, L83–I103, G116–V136, I160–L180, L188–V208, G231–W248, L273–L293, F303–A323, T363–F383, I386–V406, V425–F445, and L448–L468.

Belongs to the amino acid-polyamine-organocation (APC) superfamily. Polyamine:cation symporter (PHS) (TC 2.A.3.12) family.

The protein localises to the cell membrane. Functionally, cell membrane polyamine/proton symporter involved in the polyamine uptake in cells. Possesses high affinity for spermine and spermidine and lower affinity for putrescine. Transports paraquat, a polyamine analog, and thus confers sensitivity to this chemical which is used as a herbicide. This chain is Polyamine transporter RMV1 (RMV1), found in Arabidopsis thaliana (Mouse-ear cress).